A 276-amino-acid chain; its full sequence is Undecaprenyl-diphosphatase 2 (276 aa).

Helical transmembrane passes span 1-21 (MSLW…LFPV), 44-64 (QLLP…LWYF), 87-107 (GHLM…GLLL), 114-134 (VFHD…LLWL), 150-170 (MTFK…IPGF), 190-210 (AAEF…VLEL), 222-242 (DALL…RFLM), and 251-271 (LASF…WFML).

This sequence belongs to the UppP family.

It localises to the cell inner membrane. The catalysed reaction is di-trans,octa-cis-undecaprenyl diphosphate + H2O = di-trans,octa-cis-undecaprenyl phosphate + phosphate + H(+). Its function is as follows. Catalyzes the dephosphorylation of undecaprenyl diphosphate (UPP). Confers resistance to bacitracin. The protein is Undecaprenyl-diphosphatase 2 of Burkholderia orbicola (strain AU 1054).